The following is a 376-amino-acid chain: 3-aminomethylindole N-methyltransferase (376 aa).

The S-adenosyl-L-homocysteine site is built by glycine 220, aspartate 243, aspartate 263, and methionine 264.

It belongs to the class I-like SAM-binding methyltransferase superfamily. Cation-independent O-methyltransferase family. As to expression, more present in the fifth leaf than in the second leaf (at protein level).

It catalyses the reaction 3-(aminomethyl)indole + 2 S-adenosyl-L-methionine = gramine + 2 S-adenosyl-L-homocysteine + 2 H(+). It functions in the pathway alkaloid biosynthesis. With respect to regulation, repressed by sodium carbonate, sodium bicarbonate and K-phosphate. Its function is as follows. Methylates 3-aminomethylindole (AMI) and N-methyl-3-aminomethylindole (MAMI), two substrates involved in gramine biosynthesis, a toxic indole alkaloid. Can use S-adenosyl-L-methionine (AdoMet) as a methyl donor. Unable to mediate caffeic acid O-methylation. The protein is 3-aminomethylindole N-methyltransferase of Hordeum vulgare subsp. vulgare (Domesticated barley).